Consider the following 163-residue polypeptide: UPF0763 protein JJD26997_0796 (163 aa).

The protein belongs to the UPF0763 family.

In Campylobacter jejuni subsp. doylei (strain ATCC BAA-1458 / RM4099 / 269.97), this protein is UPF0763 protein JJD26997_0796.